The primary structure comprises 349 residues: GDSL esterase/lipase At2g19050 (349 aa).

Residues 1 to 23 form the signal peptide; sequence MAEAIFKALLLVIATTAFATTEA. Catalysis depends on serine 38, which acts as the Nucleophile. N-linked (GlcNAc...) asparagine glycosylation occurs at asparagine 49. Catalysis depends on residues aspartate 316 and histidine 319.

Belongs to the 'GDSL' lipolytic enzyme family.

Its subcellular location is the secreted. This is GDSL esterase/lipase At2g19050 from Arabidopsis thaliana (Mouse-ear cress).